A 581-amino-acid polypeptide reads, in one-letter code: Prolactin receptor (581 aa).

An N-terminal signal peptide occupies residues 1 to 24 (MKENAASRVVFILLLFLSVSLLNG). Topologically, residues 25 to 237 (QSPPEKPKLV…NDFPVKDTSM (213 aa)) are extracellular. 2 Fibronectin type-III domains span residues 27–127 (PPEK…IVEP) and 129–229 (PPAN…IPND). The cysteines at positions 36 and 46 are disulfide-linked. N-linked (GlcNAc...) asparagine glycosylation occurs at Asn-59. Cysteines 75 and 86 form a disulfide. N-linked (GlcNAc...) asparagine glycosylation is present at Asn-132. Residues Asp-211 and His-212 each contribute to the Zn(2+) site. The WSXWS motif motif lies at 215 to 219 (WSEWS). The helical transmembrane segment at 238–258 (WIFVAILSAVICLIMVWAVAL) threads the bilayer. Over 259–581 (KGYSMVTCIL…PAKKAPPALP (323 aa)) the chain is Cytoplasmic. Residues 267–275 (ILPPVPGPK) carry the Box 1 motif motif. Disordered stretches follow at residues 324 to 384 (QLMP…EKLE) and 458 to 499 (DQHA…PRPQ). 3 stretches are compositionally biased toward basic and acidic residues: residues 329–349 (PSKE…DSDS), 375–384 (HTPEGPEKLE), and 469–483 (ETGR…RESE).

It belongs to the type I cytokine receptor family. Type 1 subfamily. In terms of assembly, interacts with SMARCA1. Interacts with NEK3 and VAV2 and this interaction is prolactin-dependent. In terms of tissue distribution, expressed in all tissues examined; liver, peripheral blood lymphocytes, endometrium, corpus luteum, intestine, fetal thymus, fetal spleen, fetal liver and fetal brain.

The protein localises to the membrane. In terms of biological role, this is a receptor for the anterior pituitary hormone prolactin. This is Prolactin receptor (PRLR) from Bos taurus (Bovine).